A 393-amino-acid chain; its full sequence is Phosphoglycerate kinase (393 aa).

Residues 21 to 23 (DLN), Arg37, 60 to 63 (HLGR), Arg115, and Arg148 contribute to the substrate site. ATP is bound by residues Lys199, Glu321, and 347 to 350 (GGDT).

This sequence belongs to the phosphoglycerate kinase family. Monomer.

It is found in the cytoplasm. The enzyme catalyses (2R)-3-phosphoglycerate + ATP = (2R)-3-phospho-glyceroyl phosphate + ADP. It functions in the pathway carbohydrate degradation; glycolysis; pyruvate from D-glyceraldehyde 3-phosphate: step 2/5. The protein is Phosphoglycerate kinase of Dechloromonas aromatica (strain RCB).